The chain runs to 411 residues: UPF0761 membrane protein PSPA7_4558 (411 aa).

Helical transmembrane passes span 36–56 (LFAV…IPAF), 92–112 (HLTW…LVTI), 132–152 (FLLY…GFAV), 174–194 (LLGL…YSAV), 207–229 (GGMF…VSLF), and 244–264 (IFLL…VLVC).

It belongs to the UPF0761 family.

The protein resides in the cell inner membrane. The protein is UPF0761 membrane protein PSPA7_4558 of Pseudomonas paraeruginosa (strain DSM 24068 / PA7) (Pseudomonas aeruginosa (strain PA7)).